Here is a 156-residue protein sequence, read N- to C-terminus: EPIDERMAL PATTERNING FACTOR-like protein 6 (156 aa).

Residues Met1–Ala47 form the signal peptide. 3 disulfides stabilise this stretch: Cys113–Cys147, Cys117–Cys123, and Cys120–Cys149.

It belongs to the plant cysteine rich small secretory peptide family. Epidermal patterning factor subfamily. As to quaternary structure, interacts with ERECTA. Expressed in the internal layers of the root, hypocotyl and stems, and in the midrib of developing rosette leaves. Detected in a ring of cells surrounding the vascular elements. Expressed in developing stems soon after bolting, in inflorescence stems, near the root apex and in the chalazal region of ovules. Not found in cotyledons or in stomatal precursors or stomata.

The protein localises to the secreted. Its function is as follows. Acts primarily as positive regulator of inflorescence growth. Endodermal expression is sufficient for proper inflorescence architecture. Redundantly involved with EPFL4 in procambial development regulation. Also acts as tissue-specific regulator of epidermal pattern. Controls stomatal patterning by repressing stomatal production. TMM (AC Q9SSD1) functions to dampen or block CHAL signaling. Not processed by SDD1 (AC O64495). Acts as growth-regulatory ligand for ERECTA family receptors. This chain is EPIDERMAL PATTERNING FACTOR-like protein 6, found in Arabidopsis thaliana (Mouse-ear cress).